A 441-amino-acid chain; its full sequence is Serine hydroxymethyltransferase (441 aa).

Residues Leu-119 and 123–125 (GHL) contribute to the (6S)-5,6,7,8-tetrahydrofolate site. At Lys-228 the chain carries N6-(pyridoxal phosphate)lysine. 370–372 (SPF) is a binding site for (6S)-5,6,7,8-tetrahydrofolate.

This sequence belongs to the SHMT family. As to quaternary structure, homodimer. Requires pyridoxal 5'-phosphate as cofactor.

It is found in the cytoplasm. The enzyme catalyses (6R)-5,10-methylene-5,6,7,8-tetrahydrofolate + glycine + H2O = (6S)-5,6,7,8-tetrahydrofolate + L-serine. The protein operates within one-carbon metabolism; tetrahydrofolate interconversion. It functions in the pathway amino-acid biosynthesis; glycine biosynthesis; glycine from L-serine: step 1/1. Catalyzes the reversible interconversion of serine and glycine with tetrahydrofolate (THF) serving as the one-carbon carrier. This reaction serves as the major source of one-carbon groups required for the biosynthesis of purines, thymidylate, methionine, and other important biomolecules. Also exhibits THF-independent aldolase activity toward beta-hydroxyamino acids, producing glycine and aldehydes, via a retro-aldol mechanism. This is Serine hydroxymethyltransferase from Chlorobium phaeovibrioides (strain DSM 265 / 1930) (Prosthecochloris vibrioformis (strain DSM 265)).